The primary structure comprises 335 residues: Glyceraldehyde-3-phosphate dehydrogenase, cytosolic (335 aa).

NAD(+) contacts are provided by residues 13-14 (RI), Asp35, and Arg80. D-glyceraldehyde 3-phosphate contacts are provided by residues 151 to 153 (SCT), Thr182, 211 to 212 (TG), and Arg234. Cys152 (nucleophile) is an active-site residue. Asn316 lines the NAD(+) pocket.

Belongs to the glyceraldehyde-3-phosphate dehydrogenase family. In terms of assembly, homotetramer.

It localises to the cytoplasm. The enzyme catalyses D-glyceraldehyde 3-phosphate + phosphate + NAD(+) = (2R)-3-phospho-glyceroyl phosphate + NADH + H(+). The protein operates within carbohydrate degradation; glycolysis; pyruvate from D-glyceraldehyde 3-phosphate: step 1/5. This chain is Glyceraldehyde-3-phosphate dehydrogenase, cytosolic (GAPC), found in Chondrus crispus (Carrageen Irish moss).